We begin with the raw amino-acid sequence, 309 residues long: Homoserine kinase (309 aa).

Position 91 to 101 (91 to 101 (PVGSGLGSSAC)) interacts with ATP.

The protein belongs to the GHMP kinase family. Homoserine kinase subfamily.

Its subcellular location is the cytoplasm. The catalysed reaction is L-homoserine + ATP = O-phospho-L-homoserine + ADP + H(+). The protein operates within amino-acid biosynthesis; L-threonine biosynthesis; L-threonine from L-aspartate: step 4/5. Its function is as follows. Catalyzes the ATP-dependent phosphorylation of L-homoserine to L-homoserine phosphate. The sequence is that of Homoserine kinase from Hamiltonella defensa subsp. Acyrthosiphon pisum (strain 5AT).